We begin with the raw amino-acid sequence, 892 residues long: Leucine--tRNA ligase (892 aa).

The 'HIGH' region signature appears at P42–H52. The 'KMSKS' region signature appears at T640–S644. K643 is a binding site for ATP.

It belongs to the class-I aminoacyl-tRNA synthetase family.

Its subcellular location is the cytoplasm. The catalysed reaction is tRNA(Leu) + L-leucine + ATP = L-leucyl-tRNA(Leu) + AMP + diphosphate. The chain is Leucine--tRNA ligase from Albidiferax ferrireducens (strain ATCC BAA-621 / DSM 15236 / T118) (Rhodoferax ferrireducens).